Here is a 183-residue protein sequence, read N- to C-terminus: CKLF-like MARVEL transmembrane domain-containing protein 6 (183 aa).

At Met1 the chain carries N-acetylmethionine. Over 1-39 (MENGAVYSPTTEEDPGPARGPRSGLAAYFFMGRLPLLRR) the chain is Cytoplasmic. Ser8 carries the phosphoserine modification. One can recognise an MARVEL domain in the interval 33 to 160 (RLPLLRRVLK…DFITMLYEKR (128 aa)). Residues 40–60 (VLKGLQLLLSLLAFICEEVVS) form a helical membrane-spanning segment. Residues 61-67 (QCTLCGG) lie on the Extracellular side of the membrane. Residues 68-88 (LYFFEFVSCSAFLLSLLILIV) traverse the membrane as a helical segment. Topologically, residues 89–106 (YCTPFYERVDTTKVKSSD) are cytoplasmic. A helical membrane pass occupies residues 107 to 127 (FYITLGTGCVFLLASIIFVST). At 128–134 (HDRTSAE) the chain is on the extracellular side. The chain crosses the membrane as a helical span at residues 135 to 155 (IAAIVFGFIASFMFLLDFITM). At 156–183 (LYEKRQESQLRKPENTTRAEALTEPLNA) the chain is on the cytoplasmic side. Residue Thr171 is modified to Phosphothreonine.

Belongs to the chemokine-like factor family. In terms of assembly, interacts with PD-L1/CD274 (via transmembrane domain); the interaction is direct. Interacts with CMTM4. Interacts with CD58, ARG1, ENO1 and TMPO. As to expression, expressed in the leukocytes, placenta and testis.

The protein localises to the cell membrane. Its subcellular location is the early endosome membrane. It is found in the recycling endosome membrane. In terms of biological role, master regulator of recycling and plasma membrane expression of PD-L1/CD274, an immune inhibitory ligand critical for immune tolerance to self and antitumor immunity. Associates with both constitutive and IFNG-induced PD-L1/CD274 at recycling endosomes, where it protects PD-L1/CD274 from being targeted for lysosomal degradation, likely by preventing its STUB1-mediated ubiquitination. May stabilize PD-L1/CD274 expression on antigen presenting cells and potentiates inhibitory signaling by PDCD1/CD279, its receptor on T-cells, ultimately triggering T-cell anergy. The sequence is that of CKLF-like MARVEL transmembrane domain-containing protein 6 from Homo sapiens (Human).